The following is a 125-amino-acid chain: Sulfiredoxin, chloroplastic/mitochondrial (125 aa).

The N-terminal 22 residues, 1-22 (MANLMMRLPISLRSFSVSASSS), are a transit peptide targeting the chloroplast and mitochondrion.

Belongs to the sulfiredoxin family. As to expression, low expression in photosynthetic tissues such as leaves and sepals.

Its subcellular location is the plastid. The protein resides in the chloroplast. The protein localises to the mitochondrion. The enzyme catalyses S-hydroxy-S-oxy-L-cysteinyl-[peroxiredoxin] + [protein]-dithiol + ATP = S-hydroxy-L-cysteinyl-[peroxiredoxin] + [protein]-disulfide + ADP + phosphate. Its function is as follows. Contributes to oxidative stress resistance by reducing cysteine-sulfinic acid formed under exposure to oxidants in a peroxiredoxin. May catalyze the reduction in a multi-step process by acting both as a specific phosphotransferase and a thioltransferase. Required to switch on the antioxidant pathway to regenerate the oxidative damage. In mitochondrion, catalyzes the retroreduction of the inactive sulfinic form of atypical Prx IIF using thioredoxin as reducing agent. The polypeptide is Sulfiredoxin, chloroplastic/mitochondrial (SRX) (Arabidopsis thaliana (Mouse-ear cress)).